The following is a 274-amino-acid chain: Nitrogenase iron protein (274 aa).

Position 8–15 (8–15 (GKGGIGKS)) interacts with ATP. Cys94 is a [4Fe-4S] cluster binding site. The residue at position 97 (Arg97) is an ADP-ribosylarginine; by dinitrogenase reductase ADP-ribosyltransferase. Residue Cys129 participates in [4Fe-4S] cluster binding.

The protein belongs to the NifH/BchL/ChlL family. In terms of assembly, homodimer. It depends on [4Fe-4S] cluster as a cofactor. In terms of processing, the reversible ADP-ribosylation of Arg-97 inactivates the nitrogenase reductase and regulates nitrogenase activity.

It catalyses the reaction N2 + 8 reduced [2Fe-2S]-[ferredoxin] + 16 ATP + 16 H2O = H2 + 8 oxidized [2Fe-2S]-[ferredoxin] + 2 NH4(+) + 16 ADP + 16 phosphate + 6 H(+). Its function is as follows. The key enzymatic reactions in nitrogen fixation are catalyzed by the nitrogenase complex, which has 2 components: the iron protein and the molybdenum-iron protein. The polypeptide is Nitrogenase iron protein (Methanocella arvoryzae (strain DSM 22066 / NBRC 105507 / MRE50)).